Consider the following 5654-residue polypeptide: Mucin-5AC (5654 aa).

Positions 1–27 are cleaved as a signal peptide; sequence MSVGRRKLALLWALALALACTRHTGHA. Positions 27–49 are disordered; sequence AQDGSSESSYKHHPALSPIARGP. The region spanning 79-249 is the VWFD 1 domain; the sequence is RVCSTWGSFH…KMDDPTDQCQ (171 aa). Intrachain disulfides connect Cys81-Cys211 and Cys103-Cys248. Glu198 is a Cu(2+) binding site. N-linked (GlcNAc...) asparagine glycans are attached at residues Asn205 and Asn258. Residues His320 and His367 each coordinate Cu(2+). Positions 338–394 constitute a TIL 1 domain; it reads CPNNMQYHECRSPCADTCSNQEHSRACEDHCVAGCFCPEGTVLDDIGQTGCVPVSKC. One can recognise a VWFC 1 domain in the interval 394–465; the sequence is CACVYNGAAY…CSYVLTKPCD (72 aa). N-linked (GlcNAc...) asparagine glycosylation occurs at Asn415. The 176-residue stretch at 432–607 folds into the VWFD 2 domain; sequence GTCSVLGGAH…NTFKTQAACP (176 aa). Cystine bridges form between Cys434-Cys571, Cys456-Cys606, and Cys478-Cys486. Residue Asn524 is glycosylated (N-linked (GlcNAc...) asparagine). 2 consecutive TIL domains span residues 704-761 and 818-863; these read CPKS…ASNC and DTGA…AEDC. The VWFD 3 domain occupies 901-1072; sequence ATCAVYGDGH…NSWKLSPSCP (172 aa). Disulfide bonds link Cys903–Cys1036, Cys925–Cys1071, Cys934–Cys1033, and Cys953–Cys960. Residue Asn1308 is glycosylated (N-linked (GlcNAc...) asparagine). Residues 1336–1377 are disordered; the sequence is LVVSSTHTPSNGPSSAHTGPPSSAWPTTAGTSPRTRLPTASA. The span at 1338–1377 shows a compositional bias: polar residues; the sequence is VSSTHTPSNGPSSAHTGPPSSAWPTTAGTSPRTRLPTASA. The Cys-rich subdomain 1 repeat unit spans residues 1383–1481; that stretch reads CGEKCLWSPW…RVQCCTPLPC (99 aa). The segment at 1383-4731 is 9 X Cys-rich subdomain repeats; sequence CGEKCLWSPW…VLCCETPRGC (3349 aa). Trp1389 carries C-linked (Man) tryptophan glycosylation. Low complexity-rich tracts occupy residues 1483–1539 and 1547–1575; these read TSSS…TFST and ATST…PSTS. The interval 1483–1575 is disordered; the sequence is TSSSPAQTTP…KPTPTEPSTS (93 aa). The stretch at 1577–1677 is one Cys-rich subdomain 2 repeat; it reads CLQELCTWTE…IQCCETVNVC (101 aa). Trp1584 is a glycosylation site (C-linked (Man) tryptophan). The interval 1688 to 1733 is disordered; sequence ATTRPTPHPTGAQTQTTFTTHMPSASTEQPTATSRGGPTATSVTQG. Positions 1697 to 1707 are enriched in low complexity; the sequence is TGAQTQTTFTT. Over residues 1708–1733 the composition is skewed to polar residues; that stretch reads HMPSASTEQPTATSRGGPTATSVTQG. The stretch at 1743-1847 is one Cys-rich subdomain 3 repeat; sequence CHPRCTWTKW…VLCCETPRGC (105 aa). Trp1749 carries a C-linked (Man) tryptophan glycan. The disordered stretch occupies residues 1849–1948; that stretch reads MTSTPGSTSS…KPTPTEPSTS (100 aa). Low complexity-rich tracts occupy residues 1850-1912 and 1920-1948; these read TSTP…TFST and ATST…PSTS. One copy of the Cys-rich subdomain 4 repeat lies at 1950–2050; it reads CLQELCTWTE…IQCCETVNVC (101 aa). A glycan (C-linked (Man) tryptophan) is linked at Trp1957. The disordered stretch occupies residues 2059-2110; it reads TVATTRPTPHPTGAQTQTTFTTHMPSASTEQPTATSRGGPTATSVTQGTHTT. The span at 2070 to 2080 shows a compositional bias: low complexity; it reads TGAQTQTTFTT. Positions 2081-2110 are enriched in polar residues; the sequence is HMPSASTEQPTATSRGGPTATSVTQGTHTT. The stretch at 2116–2220 is one Cys-rich subdomain 5 repeat; the sequence is CHPRCTWTTW…VLCCETPKGC (105 aa). Trp2122 carries a C-linked (Man) tryptophan glycan. Over residues 2224-2234 the composition is skewed to low complexity; it reads STPVTAPSTPS. The interval 2224–3214 is disordered; the sequence is STPVTAPSTP…SHVSISKTTH (991 aa). The span at 2235 to 2249 shows a compositional bias: polar residues; the sequence is GRATSPTQSTSSWQK. Composition is skewed to low complexity over residues 2250–3184 and 3192–3214; these read SRTT…TPGP and PTTS…KTTH. The interval 2257–3200 is 107 X 8 AA approximate tandem repeats of T-T-S-T-T-S-A-P; sequence TTSTTSTPQT…VPTTSTASVS (944 aa). Residues Thr2395, Thr2405, Thr2451, Thr2461, Thr2531, Thr2541, Thr2571, Thr2581, Thr2699, Thr2709, Thr2883, Thr2893, Thr2979, Thr2989, Thr3067, and Thr3077 are each glycosylated (O-linked (GalNAc) threonine). One copy of the Cys-rich subdomain 6 repeat lies at 3222–3326; the sequence is CHLRCTWTKW…VLCCETPKGC (105 aa). The C-linked (Man) tryptophan glycan is linked to Trp3228. The segment covering 3329 to 3340 has biased composition (low complexity); the sequence is TSTPVTAPSTPS. Residues 3329-3515 are disordered; sequence TSTPVTAPST…SVSKTTHSQP (187 aa). The segment covering 3341 to 3355 has biased composition (polar residues); the sequence is GRATSPTQSTSSWQK. Positions 3356–3513 are enriched in low complexity; it reads SRTTTLVTTS…HVSVSKTTHS (158 aa). Residues 3363–3498 form a 17 X 8 AA approximate tandem repeats of T-T-S-T-T-S-A-P region; the sequence is TTSTTSTPQT…VTTTSTASVS (136 aa). Residues 3520–3660 form a Cys-rich subdomain 7 repeat; it reads CHPRCTWTKW…WQKSRTTTLV (141 aa). C-linked (Man) tryptophan glycosylation occurs at Trp3526. Residues 3628–3638 show a composition bias toward low complexity; sequence STSVTAPSTPS. The tract at residues 3628–3951 is disordered; the sequence is STSVTAPSTP…KTTHSQPVTR (324 aa). Over residues 3639-3660 the composition is skewed to polar residues; it reads GRATSPTQSTSSWQKSRTTTLV. Residues 3661–3931 form a 34 X 8 AA approximate tandem repeats of T-T-S-T-T-S-A-P region; sequence TSSITSTTQT…VPTTSTASVS (271 aa). Residues 3661–3946 are compositionally biased toward low complexity; that stretch reads TSSITSTTQT…HVSVSKTTHS (286 aa). Asn3774 carries N-linked (GlcNAc...) asparagine glycosylation. Residues 3953–4057 form a Cys-rich subdomain 8 repeat; that stretch reads CHPRCTWTKW…VLCCETPKGC (105 aa). Trp3959 carries C-linked (Man) tryptophan glycosylation. Positions 4060 to 4071 are enriched in low complexity; that stretch reads TSTPVTAPSTPS. Residues 4060-4625 form a disordered region; the sequence is TSTPVTAPST…KTTHSQPVTS (566 aa). Polar residues predominate over residues 4072-4088; it reads GRATSPTQSTSSWQKSR. Residues 4089 to 4610 are compositionally biased toward low complexity; that stretch reads TTTLVTTSTT…TTPVSKTSTS (522 aa). Residues 4093-4595 are 58 X 8 AA approximate tandem repeats of T-T-S-T-T-S-A-P; it reads VTTSTTSTPQ…TSGPGTTPSP (503 aa). 16 O-linked (GalNAc) threonine glycosylation sites follow: Thr4224, Thr4234, Thr4296, Thr4306, Thr4320, Thr4330, Thr4376, Thr4386, Thr4440, Thr4450, Thr4480, Thr4490, Thr4512, Thr4522, Thr4568, and Thr4578. The span at 4611-4624 shows a compositional bias: polar residues; the sequence is HLSVSKTTHSQPVT. A Cys-rich subdomain 9 repeat occupies 4627 to 4731; sequence CHPLCAWTKW…VLCCETPRGC (105 aa). Residue Trp4633 is glycosylated (C-linked (Man) tryptophan). The disordered stretch occupies residues 4830–4849; that stretch reads TLPPAPATSPSISTSEPVTE. The VWFC 2 domain occupies 4852-4918; that stretch reads CPNAVPPRKK…DGCCHHYQCQ (67 aa). 2 N-linked (GlcNAc...) asparagine glycosylation sites follow: Asn4869 and Asn4942. The VWFD 4 domain occupies 4919 to 5103; it reads CVCSGWGDPH…VSIPDQPACH (185 aa). Cystine bridges form between Cys4921–Cys5063, Cys4943–Cys5102, and Cys4967–Cys4975. N-linked (GlcNAc...) asparagine glycosylation is found at Asn5057, Asn5093, and Asn5236. Residues 5276 to 5345 enclose the VWFC 3 domain; the sequence is PRCLGPHGEP…GQCCPQYSCA (70 aa). N-linked (GlcNAc...) asparagine glycosylation is found at Asn5347, Asn5377, Asn5386, Asn5455, and Asn5528. The VWFC 4 domain maps to 5381–5448; sequence TVCSINGTLY…QSGQCCGTCV (68 aa). 4 disulfide bridges follow: Cys5532–Cys5582, Cys5546–Cys5596, Cys5557–Cys5612, and Cys5561–Cys5614. Positions 5532 to 5620 constitute a CTCK domain; the sequence is CAVYHRSLII…ECGCMGRRCP (89 aa). N-linked (GlcNAc...) asparagine glycosylation occurs at Asn5591. The tract at residues 5622–5654 is disordered; that stretch reads PGDTQHSEEAEPEPSQEAESGSWERGVPVSPMH.

In terms of assembly, homomultimer; disulfide-linked. The N- and C-terminus mediate their assembly into higher order structures to form filaments. The CTCK domains of two polypeptides associate in the endoplasmic reticulum to generate intermolecularly disulfide-bonded dimers. These dimers progress to the Golgi apparatus, which is a more acidic environment than the endoplasmic reticulum. Under acidic conditions, the N-termini form non-covalent intermolecular interactions that juxtapose assemblies from different CTCK-linked dimers to produce long, disulfide-linked polymers that remain highly compact until secretion. C-, O- and N-glycosylated. O-glycosylated on the second and last Thr of the Thr-/Ser-rich tandem repeats TTPSPVPTTSTTSA. One form of glycosylation is also known as Lewis B (LeB) blood group antigen, a tetrasaccharide consisting of N-acetylglucosamine having a fucosyl residue attached. It has a role as an epitope and antigen and functions as a receptor for H.pylori binding and facilitates infection. C-mannosylation in the Cys-rich subdomains may be required for proper folding of these regions and for export from the endoplasmic reticulum during biosynthesis. Post-translationally, proteolytic cleavage in the C-terminal is initiated early in the secretory pathway and does not involve a serine protease. The extent of cleavage is increased in the acidic parts of the secretory pathway. Cleavage generates a reactive group which could link the protein to a primary amide. Highly expressed in surface mucosal cells of respiratory tract and stomach epithelia. Overexpressed in a number of carcinomas. Also expressed in Barrett's esophagus epithelium and in the proximal duodenum.

It localises to the secreted. Its function is as follows. Gel-forming glycoprotein of gastric and respiratory tract epithelia that protects the mucosa from infection and chemical damage by binding to inhaled microorganisms and particles that are subsequently removed by the mucociliary system. Interacts with H.pylori in the gastric epithelium, Barrett's esophagus as well as in gastric metaplasia of the duodenum (GMD). In Homo sapiens (Human), this protein is Mucin-5AC.